Consider the following 378-residue polypeptide: Odorant receptor 45a (378 aa).

Residues 1 to 30 are Cytoplasmic-facing; the sequence is MDASYFAVQRRALEIVGFDPSTPQLSLKHP. A helical membrane pass occupies residues 31-51; that stretch reads IWAGILILSLISHNWPMVVYA. The Extracellular portion of the chain corresponds to 52–129; it reads LQDLSDLTRL…RYVARSFRNA (78 aa). Residues 130–150 traverse the membrane as a helical segment; that stretch reads AYGVICASAIAPMLLGLWGYV. At 151–173 the chain is on the cytoplasmic side; the sequence is ETGVFTPTTPMEFNFWLDERKPH. Residues 174–194 traverse the membrane as a helical segment; sequence FYWPIYVWGVLGVAAAAWLAI. The Extracellular segment spans residues 195–197; the sequence is ATD. Residues 198 to 218 traverse the membrane as a helical segment; the sequence is TLFSWLTHNVVIQFQLLELVL. The Cytoplasmic portion of the chain corresponds to 219–249; it reads EEKDLNGGDSRLTGFVSRHRIALDLAKELSS. A helical membrane pass occupies residues 250-270; that stretch reads IFGEIVFVKYMLSYLQLCMLA. Over 271–285 the chain is Extracellular; it reads FRFSRSGWSAQVPFR. The helical transmembrane segment at 286–306 threads the bilayer; it reads ATFLVAIIIQLSSYCYGGEYI. The Cytoplasmic portion of the chain corresponds to 307–342; sequence KQQSLAIAQAVYGQINWPEMTPKKRRLWQMVIMRAQ. Residues 343 to 363 traverse the membrane as a helical segment; the sequence is RPAKIFGFMFVVDLPLLLWVI. The Extracellular portion of the chain corresponds to 364 to 378; that stretch reads RTAGSFLAMLRTFER.

This sequence belongs to the insect chemoreceptor superfamily. Heteromeric odorant receptor channel (TC 1.A.69) family. Or1a subfamily. Interacts with Orco. Complexes exist early in the endomembrane system in olfactory sensory neurons (OSNs), coupling these complexes to the conserved ciliary trafficking pathway.

The protein localises to the cell membrane. Its function is as follows. Odorant receptor which mediates acceptance or avoidance behavior, depending on its substrates. The odorant receptor repertoire encodes a large collection of odor stimuli that vary widely in identity, intensity, and duration. May form a complex with Orco to form odorant-sensing units, providing sensitive and prolonged odorant signaling and calcium permeability. Involved in the behavioral responses to hexanol, pentyl acetate, benzyl acetate, and 2-heptanone. This is Odorant receptor 45a (Or45a) from Drosophila melanogaster (Fruit fly).